The chain runs to 407 residues: 1-deoxy-D-xylulose 5-phosphate reductoisomerase (407 aa).

NADPH-binding residues include T22, G23, S24, I25, G48, N51, and N128. Residue K129 participates in 1-deoxy-D-xylulose 5-phosphate binding. E130 serves as a coordination point for NADPH. A Mn(2+)-binding site is contributed by D152. 1-deoxy-D-xylulose 5-phosphate is bound by residues S153, E154, S178, and H201. Position 154 (E154) interacts with Mn(2+). G207 contacts NADPH. 1-deoxy-D-xylulose 5-phosphate contacts are provided by S214, N219, K220, and E223. E223 lines the Mn(2+) pocket.

The protein belongs to the DXR family. Mg(2+) is required as a cofactor. Mn(2+) serves as cofactor.

The enzyme catalyses 2-C-methyl-D-erythritol 4-phosphate + NADP(+) = 1-deoxy-D-xylulose 5-phosphate + NADPH + H(+). The protein operates within isoprenoid biosynthesis; isopentenyl diphosphate biosynthesis via DXP pathway; isopentenyl diphosphate from 1-deoxy-D-xylulose 5-phosphate: step 1/6. Its function is as follows. Catalyzes the NADPH-dependent rearrangement and reduction of 1-deoxy-D-xylulose-5-phosphate (DXP) to 2-C-methyl-D-erythritol 4-phosphate (MEP). The polypeptide is 1-deoxy-D-xylulose 5-phosphate reductoisomerase (Mycobacterium avium (strain 104)).